The following is a 304-amino-acid chain: Nucleotide-binding protein KRH_12070 (304 aa).

An ATP-binding site is contributed by 27–34; sequence GMSGAGRS. Residue 78-81 coordinates GTP; that stretch reads DVRG.

Belongs to the RapZ-like family.

In terms of biological role, displays ATPase and GTPase activities. This Kocuria rhizophila (strain ATCC 9341 / DSM 348 / NBRC 103217 / DC2201) protein is Nucleotide-binding protein KRH_12070.